A 690-amino-acid chain; its full sequence is MAKKKSEEHSGADANDSDYQEEPNFEDPPGFVDNISDEDLLGDMLAQRPSEADGVESVVVVDNIPKVEPVRLEKLKSVINKLFSNYGDIVNVVYPVDEEGKTKGYAFMEYKQASQAEEAVKKLNNHRLDKNHTFAVNLFTDFQKYENIPEKWEPPTVQTFKVQSDLYNFINDPDTYDQYCVAAETAPNCVQVGFWQNVLPEPFELETRERFTDTFVKWSPLGTYVVTFHKPGVAIWGGSSFQKIQKFPHPGTQFVEFSPCENYLVTYGPTPTGQKIIIWDIRTGAEKRSFVADGMSVLSMFRWSHDDKFVARMGENSIHIYETPSFYLLDLKSIKIPGIRGFSWSPTDNVIAYWVEEQNQIPARVTLMEIPKKREIRNKNLFHVADCKLHWQKSGDYLCVKVDRYSKLKKDKKDLDVKFLGMFYNFEIFHMREKEIPVDSVEIRELILAFAWEPIGNKFSIIHGETNSSNVSFYEVNKGVKPSLVKRLEKKSCTHLFWSPRGQFIVMANLTMGTFEFVDSTNDYIITSSPDHFRASEVEWDPTGRYVVTGVSSWKVKEDTGFNMYTFQGRIIKRTILKNFVQFLWRPRPPTLLSEEKQKEIKKNLKKYYAAFEQKDRLRLTRASKELLEKRSQLRETFMEYRNKRIAEWADQKSRRIMLRGHVDTDNLETDEVDEEIVEFLVKEEVTLLE.

The segment covering 1 to 11 (MAKKKSEEHSG) has biased composition (basic and acidic residues). Residues 1–36 (MAKKKSEEHSGADANDSDYQEEPNFEDPPGFVDNIS) are disordered. The span at 15–25 (NDSDYQEEPNF) shows a compositional bias: acidic residues. In terms of domain architecture, RRM spans 57 to 141 (SVVVVDNIPK…HTFAVNLFTD (85 aa)). 5 WD repeats span residues 207 to 246 (TRERFTDTFVKWSPLGTYVVTFHKPGVAIWGGSSFQKIQK), 293 to 331 (DGMSVLSMFRWSHDDKFVARMGENSIHIYETPSFYLLDL), 334 to 369 (IKIPGIRGFSWSPTDNVIAYWVEEQNQIPARVTLME), 442 to 484 (EIRE…KPSL), and 530 to 575 (PDHF…IKRT). The stretch at 595-645 (EEKQKEIKKNLKKYYAAFEQKDRLRLTRASKELLEKRSQLRETFMEYRNKR) forms a coiled coil.

It belongs to the eIF-3 subunit B family. As to quaternary structure, component of the eukaryotic translation initiation factor 3 (eIF-3) complex. The eIF-3 complex interacts with pix. Interacts with mxt.

The protein resides in the cytoplasm. RNA-binding component of the eukaryotic translation initiation factor 3 (eIF-3) complex, which is involved in protein synthesis of a specialized repertoire of mRNAs and, together with other initiation factors, stimulates binding of mRNA and methionyl-tRNAi to the 40S ribosome. The eIF-3 complex specifically targets and initiates translation of a subset of mRNAs involved in cell proliferation. This is Eukaryotic translation initiation factor 3 subunit B from Drosophila simulans (Fruit fly).